The primary structure comprises 180 residues: YY1-associated factor 2 (180 aa).

Disordered stretches follow at residues 1-24, 47-120, and 132-180; these read MGDK…GYWD, GTST…EVTV, and EKTK…GESH. The RanBP2-type zinc-finger motif lies at 19–48; that stretch reads DEGYWDCSVCTFRNSAEAFKCMMCDVRKGT. The segment covering 62–73 has biased composition (low complexity); sequence QQVTQQFVPPTQ. The span at 74-93 shows a compositional bias: basic and acidic residues; the sequence is SKKEKKDKVEKEKSEKETTS. Over residues 95-105 the composition is skewed to basic residues; sequence KNSHKKTRPRL. Composition is skewed to low complexity over residues 136–156 and 163–174; these read SPPA…SSSD and SRSSSPRGEASS. A Phosphoserine modification is found at S167.

As to quaternary structure, interacts with MYC, MYCN, RNF2/RING1B and YY1. Part of the E2F6.com-1 complex in G0 phase composed of E2F6, MGA, MAX, TFDP1, CBX3, BAT8, EUHMTASE1, RING1, RNF2, MBLR, L3MBTL2 and YAF2.

The protein localises to the nucleus. In terms of biological role, binds to MYC and inhibits MYC-mediated transactivation. Also binds to MYCN and enhances MYCN-dependent transcriptional activation. Increases calpain 2-mediated proteolysis of YY1 in vitro. Component of the E2F6.com-1 complex, a repressive complex that methylates 'Lys-9' of histone H3, suggesting that it is involved in chromatin-remodeling. This chain is YY1-associated factor 2 (YAF2), found in Homo sapiens (Human).